Reading from the N-terminus, the 300-residue chain is Ribosomal RNA small subunit methyltransferase H (300 aa).

S-adenosyl-L-methionine contacts are provided by residues 33–35 (GGH), Asp-53, Phe-78, Asp-97, and Gln-104.

Belongs to the methyltransferase superfamily. RsmH family.

It is found in the cytoplasm. It catalyses the reaction cytidine(1402) in 16S rRNA + S-adenosyl-L-methionine = N(4)-methylcytidine(1402) in 16S rRNA + S-adenosyl-L-homocysteine + H(+). Functionally, specifically methylates the N4 position of cytidine in position 1402 (C1402) of 16S rRNA. The polypeptide is Ribosomal RNA small subunit methyltransferase H (Karelsulcia muelleri (strain GWSS) (Sulcia muelleri)).